Consider the following 252-residue polypeptide: Neurotrophic factor BDNF precursor form (252 aa).

The first 18 residues, 1–18 (MTILFLTMVISYFGCMKA), serve as a signal peptide directing secretion. Residues 19–133 (APMKEANVRG…AANMSMRVRR (115 aa)) constitute a propeptide that is removed on maturation. The interval 43–62 (LESVNGPKAGSRGLTSSSSS) is disordered. N126 is a glycosylation site (N-linked (GlcNAc...) asparagine). Cystine bridges form between C146/C213, C191/C242, and C201/C244.

This sequence belongs to the NGF-beta family. Monomers and homodimers. Binds to NTRK2/TRKB. Can form heterodimers with other neurotrophin family members, such as NTF3 and NTF4 (in vitro), but the physiological relevance of this is not clear. BDNF precursor form: interacts with the heterodimer formed by NGFR and SORCS2. Mature BDNF has much lower affinity for the heterodimer formed by NGFR and SORCS2. Post-translationally, N-glycosylated and glycosulfated, contrary to mature BDNF. Mature BDNF is produced by proteolytic removal of the propeptide, catalyzed by a FURIN family member. In addition, the precursor form is proteolytically cleaved within the propeptide, but this is not an obligatory intermediate for the production of mature BDNF. Can be converted into mature BDNF by plasmin (PLG). In terms of tissue distribution, brain and central nervous system.

Its subcellular location is the secreted. Important signaling molecule that activates signaling cascades downstream of NTRK2. During development, promotes the survival and differentiation of selected neuronal populations of the peripheral and central nervous systems. Participates in axonal growth, pathfinding and in the modulation of dendritic growth and morphology. Major regulator of synaptic transmission and plasticity at adult synapses in many regions of the CNS. The versatility of BDNF is emphasized by its contribution to a range of adaptive neuronal responses including long-term potentiation (LTP), long-term depression (LTD), certain forms of short-term synaptic plasticity, as well as homeostatic regulation of intrinsic neuronal excitability. In terms of biological role, important signaling molecule that activates signaling cascades downstream of NTRK2. Activates signaling cascades via the heterodimeric receptor formed by NGFR and SORCS2. Signaling via NGFR and SORCS2 plays a role in synaptic plasticity and long-term depression (LTD). Binding to NGFR and SORCS2 promotes neuronal apoptosis. Promotes neuronal growth cone collapse. The polypeptide is Neurotrophic factor BDNF precursor form (BDNF) (Sus scrofa (Pig)).